A 271-amino-acid chain; its full sequence is GPN-loop GTPase 3 (271 aa).

13–18 (GAGKST) is a GTP binding site. Residues 70–72 (GPN) carry the Gly-Pro-Asn (GPN)-loop; involved in dimer interface motif. GTP is bound at residue 173 to 176 (SKLD).

The protein belongs to the GPN-loop GTPase family. In terms of assembly, heterodimers with GPN1 or GPN2. Binds to RNA polymerase II (RNAPII).

Its function is as follows. Small GTPase required for proper nuclear import of RNA polymerase II and III (RNAPII and RNAPIII). May act at an RNAP assembly step prior to nuclear import. The protein is GPN-loop GTPase 3 of Kluyveromyces lactis (strain ATCC 8585 / CBS 2359 / DSM 70799 / NBRC 1267 / NRRL Y-1140 / WM37) (Yeast).